A 1368-amino-acid polypeptide reads, in one-letter code: DNA-directed RNA polymerase subunit beta (1368 aa).

The protein belongs to the RNA polymerase beta chain family. The RNAP catalytic core consists of 2 alpha, 1 beta, 1 beta' and 1 omega subunit. When a sigma factor is associated with the core the holoenzyme is formed, which can initiate transcription.

It carries out the reaction RNA(n) + a ribonucleoside 5'-triphosphate = RNA(n+1) + diphosphate. DNA-dependent RNA polymerase catalyzes the transcription of DNA into RNA using the four ribonucleoside triphosphates as substrates. This chain is DNA-directed RNA polymerase subunit beta, found in Cupriavidus metallidurans (strain ATCC 43123 / DSM 2839 / NBRC 102507 / CH34) (Ralstonia metallidurans).